Consider the following 449-residue polypeptide: GTP-binding protein A (449 aa).

The tract at residues 1 to 77 is disordered; the sequence is MFNINPYKSK…LSSKTENSLS (77 aa). 2 stretches are compositionally biased toward low complexity: residues 8-46 and 67-77; these read KSKT…SSSS and SLSSKTENSLS. The AIG1-type G domain occupies 149-386; the sequence is QNECNVLLLG…FMGHLRAKNK (238 aa). Residues 158-165 form a G1 region; the sequence is GRTGVGKS. A GTP-binding site is contributed by 158 to 165; sequence GRTGVGKS. The G2 stretch occupies residues 183–187; it reads SCTQD. The interval 204 to 207 is G3; it reads DTPG. Residues 275–278 are G4; sequence TYAN. The tract at residues 336-338 is G5; it reads ENS.

It belongs to the TRAFAC class TrmE-Era-EngA-EngB-Septin-like GTPase superfamily. AIG1/Toc34/Toc159-like paraseptin GTPase family. IAN subfamily.

The sequence is that of GTP-binding protein A (gtpA) from Dictyostelium discoideum (Social amoeba).